Consider the following 319-residue polypeptide: Proline hydroxylase buaE (319 aa).

One can recognise a Fe2OG dioxygenase domain in the interval asparagine 168–proline 280. Fe cation contacts are provided by histidine 195, aspartate 197, and histidine 255. Arginine 271 serves as a coordination point for 2-oxoglutarate.

It belongs to the iron/ascorbate-dependent oxidoreductase family. Requires Fe(2+) as cofactor.

It participates in mycotoxin biosynthesis. In terms of biological role, proline hydroxylase; part of the gene cluster that mediates the biosynthesis of burnettramic acids, an unusual class of bolaamphiphilic pyrrolizidinediones that display potent antibacterial, antifungal, and cytotoxic activities. The first step of the biosynthesis of burnettramic acids is the hydroxylation of proline by the proline hydroxylase buaE to generate 4-hydroxyproline. The PKS-NRPS buaA and trans-enoyl reductase buaC construct the highly reduced polyketide chain, and the condensation (C) domain of buaA then catalyzes the amide bond formation with the activated 4-hydroxyproline. This is followed by the R domain releasing the nascent polyketide-peptide directly via a Dieckmann condensation to afford a tetramic acid fused to the hydroxyproline, generating the bicyclic pyrrolidinedione moiety. The cytochrome P450 monooxygenases buaD and buaG are likely responsible for the multiple hydroxylations on the polyketide chain and its terminus, although in the heterologous context, buaD does not appear to be required. Therefore, while buaG may be a multifunctional cytochrome P450 monooxygenase, it cannot be ruled out that the two secondary alcohols on the polyketide chain could have an acetate origin. Finally, the glycosyltransferase buaB transfers beta-D-mannose to the aglycone burnettramic acid A to form burnettramic acid A. Burnettramic acid B is a minor cis-pyrrolizidine epimer of burnettramic acid A and it is likely that small amounts of it form naturally in acidic environments. The sequence is that of Proline hydroxylase buaE from Petromyces alliaceus (Aspergillus alliaceus).